We begin with the raw amino-acid sequence, 209 residues long: ATP synthase subunit delta (209 aa).

It belongs to the ATPase delta chain family. F-type ATPases have 2 components, F(1) - the catalytic core - and F(0) - the membrane proton channel. F(1) has five subunits: alpha(3), beta(3), gamma(1), delta(1), epsilon(1). F(0) has three main subunits: a(1), b(2) and c(10-14). The alpha and beta chains form an alternating ring which encloses part of the gamma chain. F(1) is attached to F(0) by a central stalk formed by the gamma and epsilon chains, while a peripheral stalk is formed by the delta and b chains.

It localises to the cell inner membrane. Its function is as follows. F(1)F(0) ATP synthase produces ATP from ADP in the presence of a proton or sodium gradient. F-type ATPases consist of two structural domains, F(1) containing the extramembraneous catalytic core and F(0) containing the membrane proton channel, linked together by a central stalk and a peripheral stalk. During catalysis, ATP synthesis in the catalytic domain of F(1) is coupled via a rotary mechanism of the central stalk subunits to proton translocation. In terms of biological role, this protein is part of the stalk that links CF(0) to CF(1). It either transmits conformational changes from CF(0) to CF(1) or is implicated in proton conduction. The polypeptide is ATP synthase subunit delta (Psychrobacter sp. (strain PRwf-1)).